We begin with the raw amino-acid sequence, 357 residues long: MNTLFMHCRPGFEGEVCSEIADHAARLDVAGYAKARPDTACAEFICTEADGAERLMNGQRFDKLIFPRQWARGLFLELPETDRISVILAQLAAFPICGSLWLEVVDTNDGKELSNFCKKFEAPLRKALTQAGKLVDDPRKPRLLLTFKSGREVFLGLADADNSAMWPMGIPRLKFPREAPSRSTLKLEEAWHHFIPRDQWDERLSGDMTSVDLGAAPGGWTYQLVRRGMLVTAIDNGPMAESLMDTGLVQHLMADGFTYKPRQPVDWMVCDIVEKPARNAALLETWLGEGLCREAVVNLKLPMKQRYAEVRRLLDRIEEGFQARGVRVSIGCKQLYHDREEVTCHLRRLDVAKAARK.

S-adenosyl-L-methionine is bound by residues Ser183, 216-219, Asp235, Asp255, and Asp271; that span reads APGG. Residue Lys300 is the Proton acceptor of the active site.

This sequence belongs to the class I-like SAM-binding methyltransferase superfamily. RNA methyltransferase RlmE family. RlmM subfamily. In terms of assembly, monomer.

Its subcellular location is the cytoplasm. The catalysed reaction is cytidine(2498) in 23S rRNA + S-adenosyl-L-methionine = 2'-O-methylcytidine(2498) in 23S rRNA + S-adenosyl-L-homocysteine + H(+). Catalyzes the 2'-O-methylation at nucleotide C2498 in 23S rRNA. In Pseudomonas syringae pv. syringae (strain B728a), this protein is Ribosomal RNA large subunit methyltransferase M.